We begin with the raw amino-acid sequence, 420 residues long: Protein-lysine 6-oxidase (420 aa).

The signal sequence occupies residues 1-27 (MRCAPPGLLLAQLHACIFWSGLWPAGC). Positions 28–171 (QSPPAAWRQR…RPGREDVMVG (144 aa)) are cleaved as a propeptide — removed by BMP1. The disordered stretch occupies residues 54–177 (AQYQPPRRRQ…VMVGDDPYSP (124 aa)). A glycan (N-linked (GlcNAc...) asparagine) is linked at Asn78. Residues 82–92 (PRAAAAAAARP) are compositionally biased toward low complexity. The segment covering 93 to 105 (QPEPQPQAQPQPR) has biased composition (pro residues). 2 stretches are compositionally biased toward basic residues: residues 107–119 (RSSR…RRHW) and 134–147 (APRR…SRRR). Tyr190 bears the Sulfotyrosine mark. The segment at 216–420 (PDLVPDPYYI…YASGCTISPY (205 aa)) is lysyl-oxidase like. 5 disulfides stabilise this stretch: Cys241–Cys247, Cys294–Cys343, Cys327–Cys333, Cys354–Cys364, and Cys401–Cys415. Cu cation contacts are provided by His295, His297, and His299. Residues 323-358 (KASFCLEDTSCDYGYYRRYACTAHTQGLSPGCYDTY) constitute a cross-link (lysine tyrosylquinone (Lys-Tyr)). 2',4',5'-topaquinone is present on Tyr358.

Belongs to the lysyl oxidase family. The cofactor is Cu cation. Requires lysine tyrosylquinone residue as cofactor. In terms of processing, the lysine tyrosylquinone cross-link (LTQ) is generated by condensation of the epsilon-amino group of a lysine with a topaquinone produced by oxidation of tyrosine. Post-translationally, proteolytically cleaved by BMP1 which removes the propeptide. Also proteolytically cleaved by ADAMTS2 and ADAMTS14, but not by ADAMTS3, at an additional cleavage site downstream of the BMP1 cleavage site. The propeptide plays a role in directing the deposition of this enzyme to elastic fibers, via interaction with tropoelastin. Cleavage by BMP1 to remove the propeptide does not increase enzymatic activity but increases binding to collagen. Cleavage by ADAMTS2 produces a form with reduced collagen-binding activity. Sulfated at Tyr-190 and also at either Tyr-186 or Tyr-187 which enhances binding to collagen.

The protein resides in the secreted. It is found in the extracellular space. The enzyme catalyses L-lysyl-[protein] + O2 + H2O = (S)-2-amino-6-oxohexanoyl-[protein] + H2O2 + NH4(+). Responsible for the post-translational oxidative deamination of peptidyl lysine residues in precursors to fibrous collagen and elastin. Functionally, in addition to cross linking of extracellular matrix proteins, it may have a direct role in tumor suppression. The chain is Protein-lysine 6-oxidase (LOX) from Gallus gallus (Chicken).